The primary structure comprises 430 residues: Tol-Pal system protein TolB (430 aa).

The first 21 residues, 1–21 (MKQAFRVALSVLMLFVAVAHA), serve as a signal peptide directing secretion.

This sequence belongs to the TolB family. In terms of assembly, the Tol-Pal system is composed of five core proteins: the inner membrane proteins TolA, TolQ and TolR, the periplasmic protein TolB and the outer membrane protein Pal. They form a network linking the inner and outer membranes and the peptidoglycan layer.

It localises to the periplasm. Its function is as follows. Part of the Tol-Pal system, which plays a role in outer membrane invagination during cell division and is important for maintaining outer membrane integrity. TolB occupies a key intermediary position in the Tol-Pal system because it communicates directly with both membrane-embedded components, Pal in the outer membrane and TolA in the inner membrane. This is Tol-Pal system protein TolB from Erwinia tasmaniensis (strain DSM 17950 / CFBP 7177 / CIP 109463 / NCPPB 4357 / Et1/99).